Consider the following 259-residue polypeptide: Trans-4-hydroxycyclohexanecarboxylate dehydrogenase (259 aa).

The NAD(+) site is built by arginine 20, methionine 22, aspartate 41, aspartate 73, valine 74, asparagine 100, tyrosine 164, lysine 168, valine 197, threonine 199, and threonine 202. The active-site Proton acceptor is the tyrosine 164.

It belongs to the short-chain dehydrogenases/reductases (SDR) family. Homodimer. Homotetramer.

It carries out the reaction trans-4-hydroxycyclohexane-1-carboxylate + NAD(+) = 4-oxocyclohexane-1-carboxylate + NADH + H(+). Strongly inhibited by N-bromosuccinimide. Not inhibited by sulfhydryl reagents, such as iodoacetic acid, iodoacetamide, N-ethylmaleimide and p-hydroxymercuribenzoic acid. Functionally, dehydrogenase involved in a cyclohexanecarboxylate (CHCA) degradation pathway. Catalyzes the NAD(+)-dependent dehydrogenation of trans-4-hydroxycyclohexanecarboxylate (trans-4-hydroxyCHCA) to form 4-oxocyclohexanecarboxylate (4-oxoCHCA). Is highly specific for the trans-4-hydroxy derivative and shows only weak activity with cis-4-hydroxyCHCA. Can also catalyze the reverse reaction (4-oxoCHCA reduction) with a higher catalytic efficiency. In the reverse reaction, is highly specific for 4-oxoCHCA and cannot use either the 2-oxo or the 3-oxo homolog as substrate. Cannot use NADP(+). This is Trans-4-hydroxycyclohexanecarboxylate dehydrogenase from Sinomonas cyclohexanicum (Corynebacterium cyclohexanicum).